Reading from the N-terminus, the 208-residue chain is Ribosomal RNA large subunit methyltransferase E (208 aa).

5 residues coordinate S-adenosyl-L-methionine: glycine 62, tryptophan 64, aspartate 82, aspartate 98, and aspartate 123. Residue lysine 163 is the Proton acceptor of the active site.

It belongs to the class I-like SAM-binding methyltransferase superfamily. RNA methyltransferase RlmE family.

Its subcellular location is the cytoplasm. The catalysed reaction is uridine(2552) in 23S rRNA + S-adenosyl-L-methionine = 2'-O-methyluridine(2552) in 23S rRNA + S-adenosyl-L-homocysteine + H(+). Specifically methylates the uridine in position 2552 of 23S rRNA at the 2'-O position of the ribose in the fully assembled 50S ribosomal subunit. This chain is Ribosomal RNA large subunit methyltransferase E, found in Idiomarina loihiensis (strain ATCC BAA-735 / DSM 15497 / L2-TR).